The chain runs to 203 residues: ATP-dependent Clp protease proteolytic subunit (203 aa).

The active-site Nucleophile is Ser107. His132 is a catalytic residue.

The protein belongs to the peptidase S14 family. Fourteen ClpP subunits assemble into 2 heptameric rings which stack back to back to give a disk-like structure with a central cavity, resembling the structure of eukaryotic proteasomes.

Its subcellular location is the cytoplasm. The enzyme catalyses Hydrolysis of proteins to small peptides in the presence of ATP and magnesium. alpha-casein is the usual test substrate. In the absence of ATP, only oligopeptides shorter than five residues are hydrolyzed (such as succinyl-Leu-Tyr-|-NHMec, and Leu-Tyr-Leu-|-Tyr-Trp, in which cleavage of the -Tyr-|-Leu- and -Tyr-|-Trp bonds also occurs).. Cleaves peptides in various proteins in a process that requires ATP hydrolysis. Has a chymotrypsin-like activity. Plays a major role in the degradation of misfolded proteins. The chain is ATP-dependent Clp protease proteolytic subunit from Shewanella denitrificans (strain OS217 / ATCC BAA-1090 / DSM 15013).